The following is a 431-amino-acid chain: Gamma-glutamyl phosphate reductase (431 aa).

It belongs to the gamma-glutamyl phosphate reductase family.

It localises to the cytoplasm. It catalyses the reaction L-glutamate 5-semialdehyde + phosphate + NADP(+) = L-glutamyl 5-phosphate + NADPH + H(+). Its pathway is amino-acid biosynthesis; L-proline biosynthesis; L-glutamate 5-semialdehyde from L-glutamate: step 2/2. Its function is as follows. Catalyzes the NADPH-dependent reduction of L-glutamate 5-phosphate into L-glutamate 5-semialdehyde and phosphate. The product spontaneously undergoes cyclization to form 1-pyrroline-5-carboxylate. The sequence is that of Gamma-glutamyl phosphate reductase from Beijerinckia indica subsp. indica (strain ATCC 9039 / DSM 1715 / NCIMB 8712).